A 463-amino-acid chain; its full sequence is Fumarate hydratase class II (463 aa).

Substrate is bound by residues Ser97–Thr99, Arg125, His128–Asp131, Ser138–Asn140, and Thr186. Residues Arg121–Asn134 are compositionally biased toward basic and acidic residues. Residues Arg121–Thr142 are disordered. Residue His187 is the Proton donor/acceptor of the active site. Ser317 is a catalytic residue. Substrate-binding positions include Ser318 and Lys323–Asn325.

It belongs to the class-II fumarase/aspartase family. Fumarase subfamily. Homotetramer.

The protein localises to the cytoplasm. It carries out the reaction (S)-malate = fumarate + H2O. The protein operates within carbohydrate metabolism; tricarboxylic acid cycle; (S)-malate from fumarate: step 1/1. Its function is as follows. Involved in the TCA cycle. Catalyzes the stereospecific interconversion of fumarate to L-malate. This Bordetella bronchiseptica (strain ATCC BAA-588 / NCTC 13252 / RB50) (Alcaligenes bronchisepticus) protein is Fumarate hydratase class II.